The sequence spans 226 residues: UPF0177 protein YbdJ (226 aa).

5 helical membrane-spanning segments follow: residues 16-36 (LLLLLVTVILYNGWTPHLGIF), 43-63 (FAFNYYGFVDILTFLVIIVIA), 81-101 (LLFILFFIVGGNIFIALAHHL), 169-189 (FAWVHTGFTYSFFLYLPISLV), and 206-226 (LHSSINLINTYLPNLLSFWVF).

It belongs to the UPF0177 family.

It localises to the cell membrane. The sequence is that of UPF0177 protein YbdJ (ybdJ) from Lactococcus lactis subsp. lactis (strain IL1403) (Streptococcus lactis).